The chain runs to 394 residues: tRNA-specific 2-thiouridylase MnmA (394 aa).

ATP contacts are provided by residues 30–37 (AMSGGVDS) and Leu56. Cys124 serves as the catalytic Nucleophile. Cys124 and Cys220 are disulfide-bonded. Gly148 contacts ATP. Residues 170-172 (RDQ) are interaction with tRNA. Cys220 serves as the catalytic Cysteine persulfide intermediate.

This sequence belongs to the MnmA/TRMU family.

It localises to the cytoplasm. The catalysed reaction is S-sulfanyl-L-cysteinyl-[protein] + uridine(34) in tRNA + AH2 + ATP = 2-thiouridine(34) in tRNA + L-cysteinyl-[protein] + A + AMP + diphosphate + H(+). In terms of biological role, catalyzes the 2-thiolation of uridine at the wobble position (U34) of tRNA, leading to the formation of s(2)U34. The sequence is that of tRNA-specific 2-thiouridylase MnmA from Hyphomonas neptunium (strain ATCC 15444).